A 305-amino-acid polypeptide reads, in one-letter code: Ornithine carbamoyltransferase (305 aa).

Carbamoyl phosphate contacts are provided by residues 54–57 (STRT), glutamine 81, arginine 105, and 132–135 (HPCQ). L-ornithine-binding positions include asparagine 163, aspartate 223, and 227–228 (SM). Carbamoyl phosphate contacts are provided by residues 262 to 263 (CL) and arginine 290.

It belongs to the aspartate/ornithine carbamoyltransferase superfamily. OTCase family.

Its subcellular location is the cytoplasm. The catalysed reaction is carbamoyl phosphate + L-ornithine = L-citrulline + phosphate + H(+). Its pathway is amino-acid biosynthesis; L-arginine biosynthesis; L-arginine from L-ornithine and carbamoyl phosphate: step 1/3. Functionally, reversibly catalyzes the transfer of the carbamoyl group from carbamoyl phosphate (CP) to the N(epsilon) atom of ornithine (ORN) to produce L-citrulline. This is Ornithine carbamoyltransferase from Agrobacterium fabrum (strain C58 / ATCC 33970) (Agrobacterium tumefaciens (strain C58)).